We begin with the raw amino-acid sequence, 293 residues long: Bifunctional protein FolD (293 aa).

NADP(+) is bound by residues 165 to 167 (GRS), serine 190, and isoleucine 231.

This sequence belongs to the tetrahydrofolate dehydrogenase/cyclohydrolase family. In terms of assembly, homodimer.

The catalysed reaction is (6R)-5,10-methylene-5,6,7,8-tetrahydrofolate + NADP(+) = (6R)-5,10-methenyltetrahydrofolate + NADPH. It carries out the reaction (6R)-5,10-methenyltetrahydrofolate + H2O = (6R)-10-formyltetrahydrofolate + H(+). It participates in one-carbon metabolism; tetrahydrofolate interconversion. In terms of biological role, catalyzes the oxidation of 5,10-methylenetetrahydrofolate to 5,10-methenyltetrahydrofolate and then the hydrolysis of 5,10-methenyltetrahydrofolate to 10-formyltetrahydrofolate. This Synechococcus sp. (strain WH7803) protein is Bifunctional protein FolD.